Here is a 604-residue protein sequence, read N- to C-terminus: Glucose-methanol-choline family oxidoreductase mfmG (604 aa).

The N-terminal stretch at 1-24 (MYMLRPSSLLLATGLLNQGSSVLA) is a signal peptide. Residue Asn32 is glycosylated (N-linked (GlcNAc...) asparagine). Residues 44–45 (TA) and 65–66 (EA) contribute to the FAD site. N-linked (GlcNAc...) asparagine glycosylation is found at Asn76 and Asn97. Residue 126-129 (NFMA) participates in FAD binding. Residues Asn260, Asn265, Asn401, and Asn460 are each glycosylated (N-linked (GlcNAc...) asparagine). Residue His538 is the Proton acceptor of the active site. Residues Ala572 and 584 to 585 (PQ) each bind FAD.

It belongs to the GMC oxidoreductase family. Homodimer. FAD serves as cofactor.

Functionally, oxidoreductase; part of the gene cluster that mediates the biosynthesis of the phthalide-terpenoid hybrid 11'-O-desmethylfendlerol. MfmG seems not to be involved directly in the biosynthesis of 11'-O-desmethylfendlerol and its role has still to be determined. The biosynthesis of 11'-O-desmethylfendlerol begins with the NR-PKS mfmB that forms 3,5-dimethylorsellinic acid (DMOA), which is then transformed into the phthalide 5,7-dihydroxy-4-(hydroxymethyl)-6-methylphthalide by the cytochrome P450 monooxygenase mfmA and the hydrolase mfmC. Subsequently, the methyltransferase mfmE catalyzes 7-O-methylation to yield 5-hydroxy-4-(hydroxymethyl)-7-methoxy-6-methylphthalide, which undergoes C-3 hydroxylation by the cytochrome P450 monooxygenase mfmF. The resultant cyclopolic acid (2,5-dihydroxy-4-(hydroxymethyl)-7-methoxy-6-methylphthalide) is then farnesylated by the DMATS-type prenyltransferase mfmD to afford 5-O-farnesylcyclopolic acid. Finally, the Pyr4-family terpene cyclase mfmH cyclizes the farnesyl moiety of 5-O-farnesylcyclopolic acid into a drimane-like structure, thus completing the biosynthesis of 11'-O-desmethylfendlerol. The protein is Glucose-methanol-choline family oxidoreductase mfmG of Annulohypoxylon moriforme (Filamentous fungus).